The following is a 209-amino-acid chain: Imidazoleglycerol-phosphate dehydratase (209 aa).

It belongs to the imidazoleglycerol-phosphate dehydratase family.

It localises to the cytoplasm. The enzyme catalyses D-erythro-1-(imidazol-4-yl)glycerol 3-phosphate = 3-(imidazol-4-yl)-2-oxopropyl phosphate + H2O. Its pathway is amino-acid biosynthesis; L-histidine biosynthesis; L-histidine from 5-phospho-alpha-D-ribose 1-diphosphate: step 6/9. This Microcystis aeruginosa (strain NIES-843 / IAM M-2473) protein is Imidazoleglycerol-phosphate dehydratase.